Reading from the N-terminus, the 59-residue chain is DNA gyrase inhibitor YacG (59 aa).

Residues C7, C10, C25, and C29 each contribute to the Zn(2+) site.

This sequence belongs to the DNA gyrase inhibitor YacG family. In terms of assembly, interacts with GyrB. The cofactor is Zn(2+).

In terms of biological role, inhibits all the catalytic activities of DNA gyrase by preventing its interaction with DNA. Acts by binding directly to the C-terminal domain of GyrB, which probably disrupts DNA binding by the gyrase. This is DNA gyrase inhibitor YacG from Geobacter sulfurreducens (strain ATCC 51573 / DSM 12127 / PCA).